The following is a 585-amino-acid chain: 4-hydroxy-3-methylbut-2-en-1-yl diphosphate synthase (flavodoxin) (585 aa).

4 residues coordinate [4Fe-4S] cluster: Cys492, Cys495, Cys526, and Glu533.

It belongs to the IspG family. [4Fe-4S] cluster serves as cofactor.

The catalysed reaction is (2E)-4-hydroxy-3-methylbut-2-enyl diphosphate + oxidized [flavodoxin] + H2O + 2 H(+) = 2-C-methyl-D-erythritol 2,4-cyclic diphosphate + reduced [flavodoxin]. The protein operates within isoprenoid biosynthesis; isopentenyl diphosphate biosynthesis via DXP pathway; isopentenyl diphosphate from 1-deoxy-D-xylulose 5-phosphate: step 5/6. Its function is as follows. Converts 2C-methyl-D-erythritol 2,4-cyclodiphosphate (ME-2,4cPP) into 1-hydroxy-2-methyl-2-(E)-butenyl 4-diphosphate. The chain is 4-hydroxy-3-methylbut-2-en-1-yl diphosphate synthase (flavodoxin) from Akkermansia muciniphila (strain ATCC BAA-835 / DSM 22959 / JCM 33894 / BCRC 81048 / CCUG 64013 / CIP 107961 / Muc).